The primary structure comprises 317 residues: Small ribosomal subunit protein RACK1 (317 aa).

WD repeat units follow at residues 15–55, 64–103, 106–146, 148–188, 191–230, 232–272, and 281–317; these read GHNG…DNQY, GHSHIVQDVTISADGAYALSASWDRTLRLWDLETGETTQR, GHKG…ATLT, HNDW…VNAD, GHTGYISCITLSPDGSLCASAGKDGVIILWDLNKNKTLYT, EAKA…DELK, and AKDPEAISLAWSADGQNLFAGYTDNVIRVWQVMTPSA.

The protein belongs to the WD repeat G protein beta family. Ribosomal protein RACK1 subfamily. In terms of assembly, component of the small ribosomal subunit. Mature ribosomes consist of a small (40S) and a large (60S) subunit. The 40S subunit contains about 32 different proteins and 1 molecule of RNA (18S). The 60S subunit contains 45 different proteins and 3 molecules of RNA (25S, 5.8S and 5S).

The protein resides in the cytoplasm. In terms of biological role, component of the ribosome, a large ribonucleoprotein complex responsible for the synthesis of proteins in the cell. The small ribosomal subunit (SSU) binds messenger RNAs (mRNAs) and translates the encoded message by selecting cognate aminoacyl-transfer RNA (tRNA) molecules. The large subunit (LSU) contains the ribosomal catalytic site termed the peptidyl transferase center (PTC), which catalyzes the formation of peptide bonds, thereby polymerizing the amino acids delivered by tRNAs into a polypeptide chain. The nascent polypeptides leave the ribosome through a tunnel in the LSU and interact with protein factors that function in enzymatic processing, targeting, and the membrane insertion of nascent chains at the exit of the ribosomal tunnel. Located at the head of the 40S ribosomal subunit in the vicinity of the mRNA exit channel, it serves as a scaffold protein that can recruit other proteins to the ribosome. Involved in the negative regulation of translation of a specific subset of proteins. Plays a role in morphogenesis and pathogenesis. This is Small ribosomal subunit protein RACK1 from Candida albicans (strain SC5314 / ATCC MYA-2876) (Yeast).